We begin with the raw amino-acid sequence, 134 residues long: Global transcriptional regulator Spx (134 aa).

A disulfide bridge connects residues Cys-10 and Cys-13.

This sequence belongs to the ArsC family. Spx subfamily. As to quaternary structure, interacts with the C-terminal domain of the alpha subunit of the RNAP.

Its subcellular location is the cytoplasm. Global transcriptional regulator that plays a key role in stress response and exerts either positive or negative regulation of genes. Acts by interacting with the C-terminal domain of the alpha subunit of the RNA polymerase (RNAP). This interaction can enhance binding of RNAP to the promoter region of target genes and stimulate their transcription, or block interaction of RNAP with activator. The sequence is that of Global transcriptional regulator Spx from Streptococcus pyogenes serotype M3 (strain ATCC BAA-595 / MGAS315).